The chain runs to 199 residues: Putative acetyltransferase SAV2555 (199 aa).

Belongs to the transferase hexapeptide repeat family.

The sequence is that of Putative acetyltransferase SAV2555 from Staphylococcus aureus (strain Mu50 / ATCC 700699).